Consider the following 91-residue polypeptide: Acylphosphatase (91 aa).

The region spanning C3 to H91 is the Acylphosphatase-like domain. Residues R18 and N36 contribute to the active site.

It belongs to the acylphosphatase family.

It catalyses the reaction an acyl phosphate + H2O = a carboxylate + phosphate + H(+). This chain is Acylphosphatase (acyP), found in Dehalococcoides mccartyi (strain CBDB1).